Here is a 529-residue protein sequence, read N- to C-terminus: tRNA pseudouridine synthase Pus10 (529 aa).

The Zn(2+) site is built by cysteine 21 and cysteine 24. Positions 42 to 89 (KELLNELQKFLETEKDELILEVMNPPPKKIRLQELEDSIDNLSQNGEG) form a coiled coil. A phosphoserine mark is found at serine 79 and serine 84. Residues cysteine 109 and cysteine 112 each contribute to the Zn(2+) site. The tract at residues 304 to 317 (TPWIIDGERKLESS) is RNA binding forefinger loop. Aspartate 344 (nucleophile) is an active-site residue. An RNA binding thumb loop region spans residues 442–457 (QKTPLRVLHRRPLAVR).

Belongs to the pseudouridine synthase Pus10 family. As to quaternary structure, interacts with components of the microprocessor complex DROSHA and DGCR8. Post-translationally, proteolytically cleaved during TRAIL-induced cell death. Cleaved, in vitro, either by caspase-3 (CASP3) or caspase-8 (CASP8).

Its subcellular location is the nucleus. It localises to the cytoplasm. The protein localises to the mitochondrion. It carries out the reaction uridine(55) in tRNA = pseudouridine(55) in tRNA. The catalysed reaction is uridine(54) in tRNA = pseudouridine(54) in tRNA. Functionally, protein with different functions depending on its subcellular location: involved in miRNA processing in the nucleus and acts as a tRNA pseudouridylate synthase in the cytoplasm. In the cytoplasm, acts as a pseudouridylate synthase by catalyzing synthesis of pseudouridine(54) and pseudouridine(55) from uracil-54 and uracil-55, respectively, in the psi GC loop of a subset of tRNAs. tRNA pseudouridylate synthase activity is enhanced by the presence of 1-methyladenosine at position 53-61 of tRNAs. Does not show tRNA pseudouridylate synthase activity in the nucleus. In the nucleus, promotes primary microRNAs (pri-miRNAs) processing independently of its RNA pseudouridylate synthase activity. Binds pri-miRNAs. Modulator of TRAIL/TNFSF10-induced cell death via activation of procaspase-8 and BID cleavage. Required for the progression of the apoptotic signal through intrinsic mitochondrial cell death. The protein is tRNA pseudouridine synthase Pus10 of Homo sapiens (Human).